The primary structure comprises 385 residues: MDELNINFDKYKNIRRTMGRELIDLNPIQRGGELPVESKKAIYEYWDGYSVCDYCGGRLDKVETPPICEYLHDVSKFLGMDFTRPTHGARESKFIVMHSVCNEGDFVVLDGNAHYTSFVALERAKLNSEIVEHDGYPTFRVNPEKYAEVIDNLEDKNKPIGLILLTHVDGNYGNLADAEKVGKIAKQKGYPFLLNCAYSVGRLPVNGKKLNADFLAISGHKSMASASPCGLVSIKGEYADKVFRTSKTHPVKEIEMLGCTSRGAPLISLMASFSHVAERVKNWDNEVKKTRFVVDELEKIGFNQLGIKPKQHDLIKFETPILDEIAQKDKRRGYFFYEELKKRGIGGIKRGTTKEIKMSVYGLSWEQVRYVVDNIKEIVEQGNNI.

Pyridoxal 5'-phosphate contacts are provided by residues 89-90 (AR), N195, and 218-220 (SGH). The residue at position 221 (K221) is an N6-(pyridoxal phosphate)lysine.

The protein belongs to the SepCysS family. In terms of assembly, homodimer. Interacts with SepRS. Requires pyridoxal 5'-phosphate as cofactor.

The catalysed reaction is O-phospho-L-seryl-tRNA(Cys) + hydrogen sulfide + H(+) = L-cysteinyl-tRNA(Cys) + phosphate. Converts O-phospho-L-seryl-tRNA(Cys) (Sep-tRNA(Cys)) to L-cysteinyl-tRNA(Cys) (Cys-tRNA(Cys)). This is O-phospho-L-seryl-tRNA:Cys-tRNA synthase from Methanococcus aeolicus (strain ATCC BAA-1280 / DSM 17508 / OCM 812 / Nankai-3).